The primary structure comprises 215 residues: Probable transaldolase (215 aa).

The active-site Schiff-base intermediate with substrate is lysine 83.

It belongs to the transaldolase family. Type 3B subfamily.

The protein localises to the cytoplasm. It catalyses the reaction D-sedoheptulose 7-phosphate + D-glyceraldehyde 3-phosphate = D-erythrose 4-phosphate + beta-D-fructose 6-phosphate. It participates in carbohydrate degradation; pentose phosphate pathway; D-glyceraldehyde 3-phosphate and beta-D-fructose 6-phosphate from D-ribose 5-phosphate and D-xylulose 5-phosphate (non-oxidative stage): step 2/3. In terms of biological role, transaldolase is important for the balance of metabolites in the pentose-phosphate pathway. This chain is Probable transaldolase, found in Clostridium perfringens (strain SM101 / Type A).